We begin with the raw amino-acid sequence, 87 residues long: Potassium channel toxin Ttr-beta-KTx (87 aa).

The signal sequence occupies residues 1 to 19; it reads MERKWALLLFLGMVTLVSC. The propeptide occupies 20-27; the sequence is GLREKHVQ. The BetaSPN-type CS-alpha/beta domain maps to 53–87; it reads QFGCPAYEGYCNNHCQDIKRKDGECHGFKCKCAKD. 3 disulfide bridges follow: C56–C77, C63–C82, and C67–C84.

It belongs to the long chain scorpion toxin family. Class 1 subfamily. Expressed by the venom gland.

The protein resides in the secreted. Its function is as follows. Inhibits voltage-gated potassium channel. In Tityus trivittatus (Argentinean scorpion), this protein is Potassium channel toxin Ttr-beta-KTx.